Reading from the N-terminus, the 731-residue chain is Polyadenylate-binding protein, cytoplasmic and nuclear (731 aa).

Positions 1-10 (MSADVSTTPA) are enriched in polar residues. Residues 1–51 (MSADVSTTPAAENVNGAAEASPAPAAAAPSATTPEVTAVENSTPAPAANQP) are disordered. Positions 17 to 39 (AAEASPAPAAAAPSATTPEVTAV) are enriched in low complexity. RRM domains follow at residues 54-132 (ASLY…WSQR), 142-219 (GNVF…HHIS), 235-312 (TNVY…RAQK), and 338-472 (VNLY…LAQR). Disordered regions lie at residues 369–429 (VMRD…SDKK) and 603–665 (GGRG…NAQT). Over residues 616–627 (GMRGGPGYGQGR) the composition is skewed to gly residues. Residues 645–656 (QNAAAPAGPQEG) are compositionally biased toward low complexity. In terms of domain architecture, PABC spans 658 to 731 (AGGVNAQTLG…MRPLAFTMST (74 aa)).

The protein belongs to the polyadenylate-binding protein type-1 family.

Its subcellular location is the cytoplasm. The protein localises to the nucleus. In terms of biological role, binds the poly(A) tail of mRNA. Appears to be an important mediator of the multiple roles of the poly(A) tail in mRNA biogenesis, stability and translation. In the nucleus, involved in both mRNA cleavage and polyadenylation. Is also required for efficient mRNA export to the cytoplasm. Acts in concert with a poly(A)-specific nuclease (PAN) to affect poly(A) tail shortening, which may occur concomitantly with either nucleocytoplasmic mRNA transport or translational initiation. In the cytoplasm, stimulates translation initiation and regulates mRNA decay through translation termination-coupled poly(A) shortening, probably mediated by PAN. The chain is Polyadenylate-binding protein, cytoplasmic and nuclear (pab1) from Aspergillus niger (strain ATCC MYA-4892 / CBS 513.88 / FGSC A1513).